The sequence spans 459 residues: Vicilin (459 aa).

Residues 1 to 28 (MAATTMKASFPLLMLMGISFLASVCVSS) form the signal peptide. Residues 36–194 (FIFKSNKFQT…SFNTDYEEIE (159 aa)) form the Cupin type-1 1 domain. Disordered stretches follow at residues 235-258 (LSKN…NLRS), 321-346 (ELVG…QGEE), and 430-459 (ENQK…LSSV). Residues 238–251 (NAKSTSKKSVSSES) are compositionally biased toward low complexity. One can recognise a Cupin type-1 2 domain in the interval 254-426 (FNLRSRGPIY…AFPGSAQEVD (173 aa)). Positions 337–346 (DDEEEEQGEE) are enriched in acidic residues. Over residues 444–459 (QRERGSRETRDRLSSV) the composition is skewed to basic and acidic residues.

Belongs to the 7S seed storage protein family.

The protein resides in the vacuole. The protein localises to the aleurone grain. Functionally, seed storage protein. This chain is Vicilin, found in Pisum sativum (Garden pea).